Reading from the N-terminus, the 300-residue chain is MVEIPAIDLRLAGGGGGAEETARLRDACARLGCFRVSGHGVPPGLQAEMKAAVRALFDLPDDAKRRNADIIPGSGYVPPGTANPLYEAFGLCDAAAPADVDAFCARLDAPPHVRETVKAYAERMHSLIVDVAGKVAASLGLHGASFQDWPCQFRMNRYNYTQDSVGSPGVQVHTDSGFLTVLQEDECVGGLEVLDPAAGEFVPVDPLPGSFVVNVGDVGQAWSNGRLHNVKHRVQCVAAVPRVSIAMFLLAPKDDTVSAPGELVDGEHPRRYREFKYDDYRRLRLSTGERAGEALARLAA.

A Fe2OG dioxygenase domain is found at tryptophan 149–proline 252. Residues histidine 173, aspartate 175, and histidine 232 each contribute to the Fe cation site. Arginine 242 provides a ligand contact to 2-oxoglutarate.

This sequence belongs to the iron/ascorbate-dependent oxidoreductase family. Fe(2+) serves as cofactor.

Functionally, 2-oxoglutarate-dependent dioxygenase essential for auxin catabolism and maintenance of auxin homeostasis in reproductive organs. Catalyzes the irreversible oxidation of indole-3-acetic acid (IAA) to the biologically inactive 2-oxoindole-3-acetic acid (OxIAA). The sequence is that of 2-oxoglutarate-dependent dioxygenase DAO (DAO) from Oryza sativa subsp. indica (Rice).